A 347-amino-acid chain; its full sequence is MQYTLKQISEHLNAKVINEPSGEVIITGLNYAEQAKENDLTLIDKQEHIKLWQNSKAAAAIVSKKISKELAQVNDKPLIVVNNADLAMAKILELFSVPYPEQNGIHEKAVIDPTAKIGKNVSIGPGAYIGKNVEIGDNTIIYANVCIYNDAKVGTNCIIWPSVTIRDRTIIDHFCRLYSNCSIGSDGFGYRPSEDGRTIVRIPHIGNVVIGSFVDIGSNTCINNAKYGSTIIGDYTKIDNLVQIGHNVIIGKGCMICGQAGISGSVTIGDGVIIAGNAGIKDHTNIGSDARIGGKAGVMWDVPAGESHMGYPAYKDSELAKQWIAIRKLPETMKKLKAIAKSLNIDL.

His246 (proton acceptor) is an active-site residue.

The protein belongs to the transferase hexapeptide repeat family. LpxD subfamily. In terms of assembly, homotrimer.

It catalyses the reaction a UDP-3-O-[(3R)-3-hydroxyacyl]-alpha-D-glucosamine + a (3R)-hydroxyacyl-[ACP] = a UDP-2-N,3-O-bis[(3R)-3-hydroxyacyl]-alpha-D-glucosamine + holo-[ACP] + H(+). It participates in bacterial outer membrane biogenesis; LPS lipid A biosynthesis. Catalyzes the N-acylation of UDP-3-O-acylglucosamine using 3-hydroxyacyl-ACP as the acyl donor. Is involved in the biosynthesis of lipid A, a phosphorylated glycolipid that anchors the lipopolysaccharide to the outer membrane of the cell. This chain is UDP-3-O-acylglucosamine N-acyltransferase 1, found in Francisella tularensis subsp. holarctica (strain LVS).